Consider the following 132-residue polypeptide: Histone H2A (132 aa).

Positions 1–10 are enriched in gly residues; the sequence is MTGGKSGGKA. Residues 1 to 24 form a disordered region; that stretch reads MTGGKSGGKASGSKNAQSRSSKAG. K5 and K9 each carry N6-acetyllysine. Q106 carries the N5-methylglutamine modification. A Phosphoserine modification is found at S129. A [ST]-Q motif motif is present at residues 129 to 130; the sequence is SQ.

Belongs to the histone H2A family. The nucleosome is a histone octamer containing two molecules each of H2A, H2B, H3 and H4 assembled in one H3-H4 heterotetramer and two H2A-H2B heterodimers. The octamer wraps approximately 147 bp of DNA. Phosphorylated to form H2AS128ph (gamma-H2A) in response to DNA double-strand breaks (DSBs) generated by exogenous genotoxic agents and by stalled replication forks. Phosphorylation is dependent on the DNA damage checkpoint kinases mec1/ATR and tel1/ATM, spreads on either side of a detected DSB site and may mark the surrounding chromatin for recruitment of proteins required for DNA damage signaling and repair. Gamma-H2A is removed from the DNA prior to the strand invasion-primer extension step of the repair process and subsequently dephosphorylated. Dephosphorylation is necessary for efficient recovery from the DNA damage checkpoint. Post-translationally, acetylated by esa1 to form H2AK4ac and H2AK7ac.

Its subcellular location is the nucleus. It localises to the chromosome. In terms of biological role, core component of nucleosome which plays a central role in DNA double strand break (DSB) repair. Nucleosomes wrap and compact DNA into chromatin, limiting DNA accessibility to the cellular machineries which require DNA as a template. Histones thereby play a central role in transcription regulation, DNA repair, DNA replication and chromosomal stability. DNA accessibility is regulated via a complex set of post-translational modifications of histones, also called histone code, and nucleosome remodeling. This chain is Histone H2A (htaA), found in Emericella nidulans (strain FGSC A4 / ATCC 38163 / CBS 112.46 / NRRL 194 / M139) (Aspergillus nidulans).